The chain runs to 953 residues: Isoleucine--tRNA ligase (953 aa).

The 'HIGH' region signature appears at 61 to 71 (PYANGALHIGH). Glu564 contributes to the L-isoleucyl-5'-AMP binding site. The 'KMSKS' region motif lies at 605-609 (KMSKS). Lys608 provides a ligand contact to ATP. Cys922, Cys925, Cys942, and Cys945 together coordinate Zn(2+).

It belongs to the class-I aminoacyl-tRNA synthetase family. IleS type 1 subfamily. In terms of assembly, monomer. Zn(2+) is required as a cofactor.

It is found in the cytoplasm. The enzyme catalyses tRNA(Ile) + L-isoleucine + ATP = L-isoleucyl-tRNA(Ile) + AMP + diphosphate. In terms of biological role, catalyzes the attachment of isoleucine to tRNA(Ile). As IleRS can inadvertently accommodate and process structurally similar amino acids such as valine, to avoid such errors it has two additional distinct tRNA(Ile)-dependent editing activities. One activity is designated as 'pretransfer' editing and involves the hydrolysis of activated Val-AMP. The other activity is designated 'posttransfer' editing and involves deacylation of mischarged Val-tRNA(Ile). The chain is Isoleucine--tRNA ligase from Thermosynechococcus vestitus (strain NIES-2133 / IAM M-273 / BP-1).